The following is a 376-amino-acid chain: N-acetyldiaminopimelate deacetylase (376 aa).

The active site involves Asp-69. Catalysis depends on Glu-128, which acts as the Proton acceptor.

The protein belongs to the peptidase M20A family. N-acetyldiaminopimelate deacetylase subfamily.

The enzyme catalyses N-acetyl-(2S,6S)-2,6-diaminopimelate + H2O = (2S,6S)-2,6-diaminopimelate + acetate. It functions in the pathway amino-acid biosynthesis; L-lysine biosynthesis via DAP pathway; LL-2,6-diaminopimelate from (S)-tetrahydrodipicolinate (acetylase route): step 3/3. In terms of biological role, catalyzes the conversion of N-acetyl-diaminopimelate to diaminopimelate and acetate. This Streptococcus pneumoniae (strain P1031) protein is N-acetyldiaminopimelate deacetylase.